The sequence spans 270 residues: ATP synthase subunit delta (270 aa).

The protein belongs to the ATPase delta chain family. In terms of assembly, F-type ATPases have 2 components, F(1) - the catalytic core - and F(0) - the membrane proton channel. F(1) has five subunits: alpha(3), beta(3), gamma(1), delta(1), epsilon(1). F(0) has three main subunits: a(1), b(2) and c(10-14). The alpha and beta chains form an alternating ring which encloses part of the gamma chain. F(1) is attached to F(0) by a central stalk formed by the gamma and epsilon chains, while a peripheral stalk is formed by the delta and b chains.

The protein localises to the cell membrane. Functionally, f(1)F(0) ATP synthase produces ATP from ADP in the presence of a proton or sodium gradient. F-type ATPases consist of two structural domains, F(1) containing the extramembraneous catalytic core and F(0) containing the membrane proton channel, linked together by a central stalk and a peripheral stalk. During catalysis, ATP synthesis in the catalytic domain of F(1) is coupled via a rotary mechanism of the central stalk subunits to proton translocation. In terms of biological role, this protein is part of the stalk that links CF(0) to CF(1). It either transmits conformational changes from CF(0) to CF(1) or is implicated in proton conduction. In Kocuria rhizophila (strain ATCC 9341 / DSM 348 / NBRC 103217 / DC2201), this protein is ATP synthase subunit delta.